A 308-amino-acid chain; its full sequence is Ribosomal RNA small subunit methyltransferase H (308 aa).

S-adenosyl-L-methionine is bound by residues Gly-32 to His-34, Asp-52, Phe-78, Asp-100, and Gln-107.

It belongs to the methyltransferase superfamily. RsmH family.

It localises to the cytoplasm. It catalyses the reaction cytidine(1402) in 16S rRNA + S-adenosyl-L-methionine = N(4)-methylcytidine(1402) in 16S rRNA + S-adenosyl-L-homocysteine + H(+). In terms of biological role, specifically methylates the N4 position of cytidine in position 1402 (C1402) of 16S rRNA. The sequence is that of Ribosomal RNA small subunit methyltransferase H from Legionella pneumophila (strain Corby).